The primary structure comprises 561 residues: Potassium-transporting ATPase potassium-binding subunit (561 aa).

Transmembrane regions (helical) follow at residues 4–24, 65–85, 133–153, 177–197, 253–273, 285–305, 380–400, 417–437, 484–504, and 528–548; these read IVMQ…PLGI, AVSV…VLML, IGLT…LFAV, LYIL…QGVV, FTNL…VVMF, AIMT…TISE, GLYG…LLVG, MVCL…AVAV, MVGA…ALYL, and FIGL…LPAL.

This sequence belongs to the KdpA family. In terms of assembly, the system is composed of three essential subunits: KdpA, KdpB and KdpC.

The protein resides in the cell membrane. Part of the high-affinity ATP-driven potassium transport (or Kdp) system, which catalyzes the hydrolysis of ATP coupled with the electrogenic transport of potassium into the cytoplasm. This subunit binds the extracellular potassium ions and delivers the ions to the membrane domain of KdpB through an intramembrane tunnel. This is Potassium-transporting ATPase potassium-binding subunit from Listeria monocytogenes serotype 4a (strain HCC23).